Consider the following 340-residue polypeptide: Anthranilate phosphoribosyltransferase (340 aa).

Residues Gly78, 81 to 82 (GD), Thr86, 88 to 91 (NIST), 106 to 114 (KHGNRSVSS), and Ser118 each bind 5-phospho-alpha-D-ribose 1-diphosphate. An anthranilate-binding site is contributed by Gly78. Residue Ser90 coordinates Mg(2+). Asn109 is an anthranilate binding site. Arg164 lines the anthranilate pocket. Mg(2+) is bound by residues Asp223 and Glu224.

This sequence belongs to the anthranilate phosphoribosyltransferase family. Homodimer. Mg(2+) serves as cofactor.

It carries out the reaction N-(5-phospho-beta-D-ribosyl)anthranilate + diphosphate = 5-phospho-alpha-D-ribose 1-diphosphate + anthranilate. It participates in amino-acid biosynthesis; L-tryptophan biosynthesis; L-tryptophan from chorismate: step 2/5. Catalyzes the transfer of the phosphoribosyl group of 5-phosphorylribose-1-pyrophosphate (PRPP) to anthranilate to yield N-(5'-phosphoribosyl)-anthranilate (PRA). The chain is Anthranilate phosphoribosyltransferase from Bacillus pumilus (strain SAFR-032).